The chain runs to 123 residues: Histone H2B (123 aa).

The disordered stretch occupies residues 1–30 (MPPKTSGKAAKKAGKAQKNITKTDKKKKRR). An N-methylproline; partial modification is found at proline 2. An N6-succinyllysine modification is found at lysine 44. A glycan (O-linked (GlcNAc) serine) is linked at serine 110. Lysine 114 and lysine 118 each carry N6-succinyllysine. A Glycyl lysine isopeptide (Lys-Gly) (interchain with G-Cter in ubiquitin) cross-link involves residue lysine 118.

Belongs to the histone H2B family. The nucleosome is a histone octamer containing two molecules each of H2A, H2B, H3 and H4 assembled in one H3-H4 heterotetramer and two H2A-H2B heterodimers. The octamer wraps approximately 147 bp of DNA. Post-translationally, phosphorylated by the catalytic component of the Dbf4-dependent kinase (DDK) complex Cdc7. In terms of processing, monoubiquitination of Lys-118 by Bre1 gives a specific tag for epigenetic transcriptional activation and is also prerequisite for histone H3 'Lys-4' and 'Lys-79' methylation. Deubiquitination of Lys-118 by the SAGA complex is involved in activating transcription of a large subset of genes. Methylation at Pro-2 increases upon heat shock. Post-translationally, glcNAcylation at Ser-110 promotes monoubiquitination of Lys-118. It fluctuates in response to extracellular glucose, and associates with transcribed genes.

The protein localises to the nucleus. The protein resides in the chromosome. In terms of biological role, core component of nucleosome. Nucleosomes wrap and compact DNA into chromatin, limiting DNA accessibility to the cellular machineries which require DNA as a template. Histones thereby play a central role in transcription regulation, DNA repair, DNA replication and chromosomal stability. DNA accessibility is regulated via a complex set of post-translational modifications of histones, also called histone code, and nucleosome remodeling. This Drosophila yakuba (Fruit fly) protein is Histone H2B (His2B).